Consider the following 406-residue polypeptide: Argininosuccinate synthase (406 aa).

Residues 11-19 (AYSGGLDTS) and alanine 38 each bind ATP. The L-citrulline site is built by tyrosine 91 and serine 96. Glycine 121 contributes to the ATP binding site. L-aspartate-binding residues include threonine 123, asparagine 127, and aspartate 128. Residue asparagine 127 participates in L-citrulline binding. Positions 131, 181, 190, 266, and 278 each coordinate L-citrulline.

This sequence belongs to the argininosuccinate synthase family. Type 1 subfamily. Homotetramer.

It is found in the cytoplasm. It catalyses the reaction L-citrulline + L-aspartate + ATP = 2-(N(omega)-L-arginino)succinate + AMP + diphosphate + H(+). It participates in amino-acid biosynthesis; L-arginine biosynthesis; L-arginine from L-ornithine and carbamoyl phosphate: step 2/3. The protein is Argininosuccinate synthase of Campylobacter jejuni (strain RM1221).